A 202-amino-acid polypeptide reads, in one-letter code: COMM domain-containing protein 10 (202 aa).

A2 bears the N-acetylalanine mark. One can recognise a COMM domain in the interval 133–202 (KLETVGWQLN…TIQAQLDSLT (70 aa)). S155 carries the post-translational modification Phosphoserine.

It belongs to the COMM domain-containing protein 10 family. As to quaternary structure, component of the commander complex consisting of the CCC subcomplex and the retriever subcomplex. Component of the CCC (COMMD/CCDC22/CCDC93) subcomplex consisting of COMMD1, COMMD2, COMMD3, COMMD4, COMMD5, COMMD6, COMMD7, COMMD8, COMMD9, COMMD10, CCDC22 and CCDC93; within the complex forms a heterodimer with COMMD5. Interacts with RELA, RELB, NFKB1/p105, NFKB2/p100. Interacts with CCDC22, CCDC93, SCNN1B, CUL1, CUL2, CUL3, CUL4A, CUL4B, CUL7. Ubiquitous.

It localises to the cytoplasm. It is found in the nucleus. Functionally, scaffold protein in the commander complex that is essential for endosomal recycling of transmembrane cargos; the commander complex is composed of the CCC subcomplex and the retriever subcomplex. May modulate activity of cullin-RING E3 ubiquitin ligase (CRL) complexes. May down-regulate activation of NF-kappa-B. This chain is COMM domain-containing protein 10 (COMMD10), found in Homo sapiens (Human).